The sequence spans 668 residues: Probable tRNA (uracil-O(2)-)-methyltransferase (668 aa).

Positions 441 to 460 (QHTDSLHISTKSSLDKDDPP) are disordered. A C3H1-type zinc finger spans residues 620–649 (LKTRLCWFYVHHPNGCPRVAKSCPYAHGAE).

This sequence belongs to the TRM44 family.

Its subcellular location is the cytoplasm. It carries out the reaction uridine(44) in tRNA(Ser) + S-adenosyl-L-methionine = 2'-O-methyluridine(44) in tRNA(Ser) + S-adenosyl-L-homocysteine + H(+). Functionally, probable adenosyl-L-methionine (AdoMet)-dependent tRNA (uracil-O(2)-)-methyltransferase. This chain is Probable tRNA (uracil-O(2)-)-methyltransferase (trmt44), found in Xenopus laevis (African clawed frog).